Here is a 360-residue protein sequence, read N- to C-terminus: Fe(3+) ions import ATP-binding protein FbpC (360 aa).

Residues 4-236 (LEIKGLHKHY…PKDRMIAEFL (233 aa)) enclose the ABC transporter domain. ATP is bound at residue 36 to 43 (GPSGCGKT).

This sequence belongs to the ABC transporter superfamily. Fe(3+) ion importer (TC 3.A.1.10) family. The complex is composed of two ATP-binding proteins (FbpC), two transmembrane proteins (FbpB) and a solute-binding protein (FbpA).

The protein resides in the cell inner membrane. It catalyses the reaction Fe(3+)(out) + ATP + H2O = Fe(3+)(in) + ADP + phosphate + H(+). Functionally, part of the ABC transporter complex FbpABC involved in Fe(3+) ions import. Responsible for energy coupling to the transport system. The protein is Fe(3+) ions import ATP-binding protein FbpC of Mesorhizobium japonicum (strain LMG 29417 / CECT 9101 / MAFF 303099) (Mesorhizobium loti (strain MAFF 303099)).